We begin with the raw amino-acid sequence, 860 residues long: Nuclear pore complex protein NUP93B (860 aa).

This sequence belongs to the nucleoporin interacting component (NIC) family. Part of the nuclear pore complex (NPC). The NPC has an eight-fold symmetrical structure comprising a central transport channel and two rings, the cytoplasmic and nuclear rings, to which eight filaments are attached. The cytoplasmic filaments have loose ends, while the nuclear filaments are joined in a distal ring, forming a nuclear basket. NPCs are highly dynamic in configuration and composition, and can be devided in 3 subcomplexes, the NUP62 subcomplex, the NUP107-160 subcomplex and the NUP93 subcomplex, containing approximately 30 different nucleoporin proteins.

The protein resides in the nucleus envelope. It localises to the nucleus. It is found in the nuclear pore complex. The sequence is that of Nuclear pore complex protein NUP93B from Arabidopsis thaliana (Mouse-ear cress).